The sequence spans 279 residues: 4-diphosphocytidyl-2-C-methyl-D-erythritol kinase (279 aa).

Lys9 is a catalytic residue. 92-102 (PLAAGLGGGSS) contributes to the ATP binding site. Asp134 is an active-site residue.

Belongs to the GHMP kinase family. IspE subfamily.

It catalyses the reaction 4-CDP-2-C-methyl-D-erythritol + ATP = 4-CDP-2-C-methyl-D-erythritol 2-phosphate + ADP + H(+). The protein operates within isoprenoid biosynthesis; isopentenyl diphosphate biosynthesis via DXP pathway; isopentenyl diphosphate from 1-deoxy-D-xylulose 5-phosphate: step 3/6. In terms of biological role, catalyzes the phosphorylation of the position 2 hydroxy group of 4-diphosphocytidyl-2C-methyl-D-erythritol. The chain is 4-diphosphocytidyl-2-C-methyl-D-erythritol kinase from Syntrophus aciditrophicus (strain SB).